Here is a 382-residue protein sequence, read N- to C-terminus: uncharacterized protein (382 aa).

The next 12 helical transmembrane spans lie at 14-34, 45-65, 79-99, 102-122, 131-151, 157-177, 204-224, 235-255, 270-290, 291-311, 325-345, and 348-368; these read GLLL…LWLA, VVSS…GYVI, FIFA…SWLA, FVAG…LMCS, LLAA…LLVS, LMSV…PLLF, LGVN…GLMP, ASIG…QWPI, VQVF…AMAP, ALFI…AWAC, ALLL…AMLM, and FSDN…LLML.

It belongs to the major facilitator superfamily. YcaD (TC 2.A.1.26) family.

It is found in the cell inner membrane. This is an uncharacterized protein from Shigella flexneri serotype 5b (strain 8401).